Reading from the N-terminus, the 532-residue chain is Bifunctional purine biosynthesis protein PurH (532 aa).

One can recognise an MGS-like domain in the interval 1–148 (MQTPKPIKRA…KNHKDVTIVV (148 aa)).

Belongs to the PurH family.

The catalysed reaction is (6R)-10-formyltetrahydrofolate + 5-amino-1-(5-phospho-beta-D-ribosyl)imidazole-4-carboxamide = 5-formamido-1-(5-phospho-D-ribosyl)imidazole-4-carboxamide + (6S)-5,6,7,8-tetrahydrofolate. It catalyses the reaction IMP + H2O = 5-formamido-1-(5-phospho-D-ribosyl)imidazole-4-carboxamide. It functions in the pathway purine metabolism; IMP biosynthesis via de novo pathway; 5-formamido-1-(5-phospho-D-ribosyl)imidazole-4-carboxamide from 5-amino-1-(5-phospho-D-ribosyl)imidazole-4-carboxamide (10-formyl THF route): step 1/1. It participates in purine metabolism; IMP biosynthesis via de novo pathway; IMP from 5-formamido-1-(5-phospho-D-ribosyl)imidazole-4-carboxamide: step 1/1. In Alteromonas mediterranea (strain DSM 17117 / CIP 110805 / LMG 28347 / Deep ecotype), this protein is Bifunctional purine biosynthesis protein PurH.